Consider the following 314-residue polypeptide: Ficolin-2 (314 aa).

The signal sequence occupies residues 1–17 (MALGSAALFVLTLTVHA). Residues 40–96 (GCPGLPGAAGPKGEAGAKGDRGESGLPGIPGKEGPTGPKGNQGEKGIRGEKGDSGPS) enclose the Collagen-like domain. Residues 49 to 101 (GPKGEAGAKGDRGESGLPGIPGKEGPTGPKGNQGEKGIRGEKGDSGPSQSCAT) form a disordered region. The Fibrinogen C-terminal domain occupies 97 to 314 (QSCATGPRTC…KVSEMKVRLI (218 aa)). 2 disulfides stabilise this stretch: Cys99–Cys127 and Cys106–Cys134. Residues Asp250, Asp252, Ser254, and Ser256 each coordinate Ca(2+). Cysteines 258 and 271 form a disulfide. Asn301 carries N-linked (GlcNAc...) asparagine glycosylation.

It belongs to the ficolin lectin family. Homotrimer. Interacts with elastin. Interacts with MASP1 and MASP2.

It localises to the secreted. In terms of biological role, may function in innate immunity through activation of the lectin complement pathway. Calcium-dependent and GlcNAc-binding lectin. This chain is Ficolin-2 (Fcn2), found in Mus musculus (Mouse).